A 588-amino-acid chain; its full sequence is Aspartate--tRNA ligase (588 aa).

An L-aspartate-binding site is contributed by Glu177. Positions 201-204 are aspartate; that stretch reads QLFK. Arg223 is a binding site for L-aspartate. Residues 223 to 225 and Gln232 each bind ATP; that span reads RDE. His451 contacts L-aspartate. Glu485 contributes to the ATP binding site. Position 492 (Arg492) interacts with L-aspartate. Residue 537 to 540 participates in ATP binding; that stretch reads GLDR.

The protein belongs to the class-II aminoacyl-tRNA synthetase family. Type 1 subfamily. In terms of assembly, homodimer.

Its subcellular location is the cytoplasm. It carries out the reaction tRNA(Asp) + L-aspartate + ATP = L-aspartyl-tRNA(Asp) + AMP + diphosphate. Catalyzes the attachment of L-aspartate to tRNA(Asp) in a two-step reaction: L-aspartate is first activated by ATP to form Asp-AMP and then transferred to the acceptor end of tRNA(Asp). This Staphylococcus aureus (strain NCTC 8325 / PS 47) protein is Aspartate--tRNA ligase.